The following is a 495-amino-acid chain: Probable cytosol aminopeptidase (495 aa).

The Mn(2+) site is built by lysine 266 and aspartate 271. The active site involves lysine 278. Mn(2+) contacts are provided by aspartate 289, aspartate 348, and glutamate 350. The active site involves arginine 352.

The protein belongs to the peptidase M17 family. Mn(2+) is required as a cofactor.

It localises to the cytoplasm. The catalysed reaction is Release of an N-terminal amino acid, Xaa-|-Yaa-, in which Xaa is preferably Leu, but may be other amino acids including Pro although not Arg or Lys, and Yaa may be Pro. Amino acid amides and methyl esters are also readily hydrolyzed, but rates on arylamides are exceedingly low.. The enzyme catalyses Release of an N-terminal amino acid, preferentially leucine, but not glutamic or aspartic acids.. In terms of biological role, presumably involved in the processing and regular turnover of intracellular proteins. Catalyzes the removal of unsubstituted N-terminal amino acids from various peptides. This is Probable cytosol aminopeptidase from Pseudomonas aeruginosa (strain UCBPP-PA14).